The following is a 293-amino-acid chain: sn-glycerol-3-phosphate transport system permease protein UgpA (293 aa).

Helical transmembrane passes span 10-30, 72-92, 108-128, 156-176, 204-224, and 261-281; these read ILPYLLVAPQIILTVIFFFWP, VTVIFSVLTALVSMGLALLLA, MMIMPYAVAPAVAGMLWLFMF, MLLVVAAAAWKQISYNFLFFV, IVFPLLAPTTFFLLVVNTVYA, and LGSSAAQSVILMVIVIALTAF. Residues 66-282 form the ABC transmembrane type-1 domain; that stretch reads YLNSLKVTVI…VIVIALTAFQ (217 aa).

It belongs to the binding-protein-dependent transport system permease family. In terms of assembly, the complex is composed of two ATP-binding proteins (UgpC), two transmembrane proteins (UgpA and UgpE) and a solute-binding protein (UgpB).

It is found in the cell inner membrane. Part of the ABC transporter complex UgpBAEC involved in sn-glycerol-3-phosphate (G3P) import. Probably responsible for the translocation of the substrate across the membrane. The protein is sn-glycerol-3-phosphate transport system permease protein UgpA (ugpA) of Agrobacterium fabrum (strain C58 / ATCC 33970) (Agrobacterium tumefaciens (strain C58)).